A 552-amino-acid polypeptide reads, in one-letter code: Hydroxylamine reductase (552 aa).

4 residues coordinate [2Fe-2S] cluster: cysteine 5, cysteine 8, cysteine 20, and cysteine 27. The hybrid [4Fe-2O-2S] cluster site is built by histidine 251, glutamate 275, cysteine 319, cysteine 407, cysteine 435, cysteine 460, glutamate 494, and lysine 496. The residue at position 407 (cysteine 407) is a Cysteine persulfide.

This sequence belongs to the HCP family. It depends on [2Fe-2S] cluster as a cofactor. Hybrid [4Fe-2O-2S] cluster is required as a cofactor.

It localises to the cytoplasm. The enzyme catalyses A + NH4(+) + H2O = hydroxylamine + AH2 + H(+). In terms of biological role, catalyzes the reduction of hydroxylamine to form NH(3) and H(2)O. The protein is Hydroxylamine reductase of Escherichia coli (strain UTI89 / UPEC).